A 301-amino-acid polypeptide reads, in one-letter code: NADH-cytochrome b5 reductase 3 (301 aa).

Gly-2 is lipidated: N-myristoyl glycine. The FAD-binding FR-type domain maps to 40 to 152; sequence DIKYSLRLID…RGPNGLLVYQ (113 aa). Residue Lys-42 is modified to N6-acetyllysine. Phosphotyrosine is present on Tyr-43. Positions 92, 93, 94, 109, 111, and 114 each coordinate FAD. Residue Lys-120 is modified to N6-acetyllysine. FAD is bound by residues Lys-126, Met-127, Ser-128, and Thr-185.

It belongs to the flavoprotein pyridine nucleotide cytochrome reductase family. As to quaternary structure, component of a complex composed of cytochrome b5, NADH-cytochrome b5 reductase (CYB5R3) and MTARC2. Interacts with MTLN; the interaction is required to maintain cellular lipid composition and leads to stimulation of mitochondrial respiratory complex I activity. FAD serves as cofactor.

The protein localises to the endoplasmic reticulum membrane. It localises to the mitochondrion outer membrane. The catalysed reaction is 2 Fe(III)-[cytochrome b5] + NADH = 2 Fe(II)-[cytochrome b5] + NAD(+) + H(+). In terms of biological role, catalyzes the reduction of two molecules of cytochrome b5 using NADH as the electron donor. The chain is NADH-cytochrome b5 reductase 3 (CYB5R3) from Macaca fascicularis (Crab-eating macaque).